The following is a 69-amino-acid chain: Large ribosomal subunit protein bL28 (69 aa).

This sequence belongs to the bacterial ribosomal protein bL28 family.

This Desulfovibrio desulfuricans (strain ATCC 27774 / DSM 6949 / MB) protein is Large ribosomal subunit protein bL28.